The primary structure comprises 247 residues: Carboxy-S-adenosyl-L-methionine synthase (247 aa).

Residues Tyr40, 65–67 (GAS), 90–91 (DN), 122–123 (DI), Asn137, and Arg204 contribute to the S-adenosyl-L-methionine site.

This sequence belongs to the class I-like SAM-binding methyltransferase superfamily. Cx-SAM synthase family. As to quaternary structure, homodimer.

The enzyme catalyses prephenate + S-adenosyl-L-methionine = carboxy-S-adenosyl-L-methionine + 3-phenylpyruvate + H2O. Catalyzes the conversion of S-adenosyl-L-methionine (SAM) to carboxy-S-adenosyl-L-methionine (Cx-SAM). This chain is Carboxy-S-adenosyl-L-methionine synthase, found in Pseudomonas putida (strain GB-1).